A 521-amino-acid chain; its full sequence is MRRFYRGIFIVWVALRYGLDELVLTSFQKPWLRVVARIVSIGRNLDAPRGQRLREALERLGPIFVKFGQVLSTRRDLLPPDIADELAFLQDRVPPFPSAVAIATIERAFRRPVGDVFVQFDETPIASASIAQVHFATIRTDEGEVREVAVKVLRPSMRGVIEKDLALMAMMAGWVEKLSPDGKRLKPREVVGEFDKYLHDELDLVREAANAAQLRRNMASLELVLIPEMFWDFCHPEVIVMERMNGVPIAQLDRLRAAGVDIPKLARDGVTIFFTQVFRDGFFHADMHPGNIQVSLAPETFGRYISLDFGIIGTLTESDKEYLAQNFVAFFRRDYKRVAELHLESGWVPEGTRIDELEGAIRTVCEPYFDRPLKEISLGMVLMRLFQTSRRFHVEIQPQLVLLQKTLLNIEGLGRQLDPELDLWHTAKPFLEKWMVDQIGPKKLFQQLKAEAPRYAKLLPELPRLLHDFLENRPADHRRELLELLAAQKRTNRLLQTIIYGGIGFVLGLLAMQLLVRVRLF.

The region spanning 119-497 is the Protein kinase domain; sequence QFDETPIASA…QKRTNRLLQT (379 aa). ATP-binding positions include 125 to 133 and K151; that span reads IASASIAQV. D286 acts as the Proton acceptor in catalysis. Residues 496–516 traverse the membrane as a helical segment; the sequence is QTIIYGGIGFVLGLLAMQLLV.

Belongs to the ABC1 family. UbiB subfamily.

The protein localises to the cell inner membrane. The protein operates within cofactor biosynthesis; ubiquinone biosynthesis [regulation]. Its function is as follows. Is probably a protein kinase regulator of UbiI activity which is involved in aerobic coenzyme Q (ubiquinone) biosynthesis. This Variovorax paradoxus (strain S110) protein is Probable protein kinase UbiB.